We begin with the raw amino-acid sequence, 101 residues long: uncharacterized protein (101 aa).

This is an uncharacterized protein from Homo sapiens (Human).